Here is a 513-residue protein sequence, read N- to C-terminus: uncharacterized protein (513 aa).

Disordered stretches follow at residues 72 to 113 (GVVP…TGQF) and 155 to 262 (IMGG…NPRF). Residues 82–106 (ANRTANPNTNSNPNPNATNAQPNPT) show a composition bias toward low complexity. Composition is skewed to polar residues over residues 164–189 (EANSEQARNANTETSNPPFASAQTQG) and 210–228 (TPLNQPPSYAASTQPEFQQ). Over residues 229 to 238 (TTSPIFSSSS) the composition is skewed to low complexity. Residues 239–248 (TPPPPPPRPS) show a composition bias toward pro residues. The span at 253-262 (GESQNTNPRF) shows a compositional bias: polar residues. An RING-type; atypical zinc finger spans residues 396-437 (CTICMEMFKINDDVIQLPCKHYFHENCIKPWLRVNGTCAICR). The tract at residues 439–513 (PVDPNSQQRN…DDFVDEEPLE (75 aa)) is disordered. Positions 442–493 (PNSQQRNNTSTDSANGHNPSNHANPSTSTTNDQGATLRNESFNAASQSNLSS) are enriched in polar residues.

This is an uncharacterized protein from Schizosaccharomyces pombe (strain 972 / ATCC 24843) (Fission yeast).